We begin with the raw amino-acid sequence, 151 residues long: Ribosome maturation factor RimP (151 aa).

Belongs to the RimP family.

The protein resides in the cytoplasm. In terms of biological role, required for maturation of 30S ribosomal subunits. The protein is Ribosome maturation factor RimP of Shewanella baltica (strain OS223).